The primary structure comprises 3177 residues: Proliferation marker protein Ki-67 (3177 aa).

One can recognise an FHA domain in the interval 27–76; the sequence is CLFGRSIECDIRIQLPVVSKRHCKIEVKEQEAILYNFSSTNPTQVNGVTI. 2 stretches are compositionally biased toward basic and acidic residues: residues 98–107 and 116–126; these read EDGNHEDGSK and LGKEPSRRASR. 2 disordered regions span residues 98-442 and 473-572; these read EDGN…PGLS and RPEL…ASIS. Phosphoserine occurs at positions 125, 128, and 162. 2 stretches are compositionally biased toward polar residues: residues 165–177 and 202–221; these read SDGS…QDSS and STGS…LSNS. Residues 235-263 are compositionally biased toward basic and acidic residues; it reads MKEELDVKSQKSCRKSEPQPDRAAEESRE. Lysine 236 is covalently cross-linked (Glycyl lysine isopeptide (Lys-Gly) (interchain with G-Cter in SUMO2)). Phosphoserine is present on residues serine 250, serine 276, serine 277, serine 286, and serine 287. The segment covering 276–286 has biased composition (polar residues); it reads SSGSTPVTAAS. Residues threonine 307 and threonine 316 each carry the phosphothreonine modification. 6 positions are modified to phosphoserine: serine 321, serine 337, serine 373, serine 498, serine 503, and serine 588. The tract at residues 455 to 618 is positively charged patch (CP); it reads KSEGMPMKRR…VKQTQTKVAK (164 aa). In terms of domain architecture, PP1-binding spans 462-509; that stretch reads KRRRVSFGGHLRPELFDENLPPNTPLKRGETPTKRKSLGTHSPAVLKT. The disordered stretch occupies residues 614–652; sequence TKVAKHVPQKQTSKRQRRPSTPKKPTSNLHNQFTTGHAN. Residues 616–634 show a composition bias toward basic residues; it reads VAKHVPQKQTSKRQRRPST. Polar residues predominate over residues 636-652; the sequence is KKPTSNLHNQFTTGHAN. Residue threonine 701 is modified to Phosphothreonine. Disordered regions lie at residues 793–815, 835–901, and 956–989; these read LEKK…SKLR, VLAE…LGSQ, and KHSP…DKPI. Positions 855–864 are enriched in polar residues; that stretch reads DQQVQDNENA. Basic and acidic residues-rich tracts occupy residues 867 to 882 and 975 to 989; these read RCKE…EKTS and LKEH…DKPI. K167R repeat units lie at residues 994–1101, 1108–1216, 1228–1336, 1348–1450, 1461–1569, 1582–1684, 1696–1806, 1817–1925, 1937–2046, 2059–2163, 2175–2284, 2296–2405, 2419–2526, 2537–2639, 2643–2748, and 2762–2870; these read TRVL…FISP, KKIP…FQTP, SAKI…FQTP, SAKM…FQIP, KTKK…FQMP, TMLA…LFQT, KQTR…FQTP, ETTK…FQTP, VKMS…FQTP, SAKM…FQTP, SAKI…VFQT, AKLP…CQAP, KTPK…SFQE, KRIS…PIQT, and TQMP…ITQI. Residues lysine 1013 and lysine 1026 each participate in a glycyl lysine isopeptide (Lys-Gly) (interchain with G-Cter in SUMO2) cross-link. The residue at position 1062 (serine 1062) is a Phosphoserine. A Glycyl lysine isopeptide (Lys-Gly) (interchain with G-Cter in SUMO1); alternate cross-link involves residue lysine 1082. Lysine 1082 is covalently cross-linked (Glycyl lysine isopeptide (Lys-Gly) (interchain with G-Cter in SUMO2); alternate). Disordered stretches follow at residues 1109 to 1321 and 1334 to 1410; these read KIPS…IRAQ and QTPA…ENDC. Serine 1114 is modified (phosphoserine). Polar residues predominate over residues 1114–1127; it reads SPHTQPVRTPASTK. Phosphothreonine is present on threonine 1122. A Phosphoserine modification is found at serine 1125. Threonine 1150 is modified (phosphothreonine). Serine 1152 is subject to Phosphoserine. 2 positions are modified to phosphothreonine: threonine 1159 and threonine 1175. Serine 1189 carries the phosphoserine modification. Threonine 1215 carries the phosphothreonine modification. At serine 1235 the chain carries Phosphoserine. A phosphothreonine mark is found at threonine 1243, threonine 1279, threonine 1295, threonine 1307, and threonine 1315. Basic residues predominate over residues 1308-1317; it reads GHKRRPRTPK. A Glycyl lysine isopeptide (Lys-Gly) (interchain with G-Cter in SUMO2) cross-link involves residue lysine 1317. Threonine 1335 carries the phosphothreonine modification. The segment covering 1353-1368 has biased composition (polar residues); sequence LESSQAEPVKTPASTK. Serine 1356 is subject to Phosphoserine. Threonine 1363 bears the Phosphothreonine mark. Serine 1366 carries the post-translational modification Phosphoserine. Basic and acidic residues predominate over residues 1371–1384; sequence SKTDLSKVDVREDP. Phosphothreonine is present on residues threonine 1400 and threonine 1416. Serine 1469 bears the Phosphoserine mark. At threonine 1477 the chain carries Phosphothreonine. Phosphoserine is present on serine 1480. Threonine 1513 carries the phosphothreonine modification. The tract at residues 1526 to 1550 is disordered; sequence RKPAKRKLDSTAGMPNSKRMRCSSK. A phosphoserine mark is found at serine 1542 and serine 1587. Lysine 1609 carries the post-translational modification N6-acetyllysine. Residue lysine 1668 forms a Glycyl lysine isopeptide (Lys-Gly) (interchain with G-Cter in SUMO2) linkage. A phosphothreonine mark is found at threonine 1684 and threonine 1712. A Phosphoserine modification is found at serine 1734. Residues 1749–1797 are disordered; sequence IPIGPEDDTENKGVKESTPQTLDSSASRTVSKRQQGAHEERPQFSGDLF. Over residues 1765 to 1782 the composition is skewed to polar residues; the sequence is STPQTLDSSASRTVSKRQ. Threonine 1766 carries the phosphothreonine modification. Position 1779 is a phosphoserine (serine 1779). Residue threonine 1805 is modified to Phosphothreonine. Position 1825 is a phosphoserine (serine 1825). 4 positions are modified to phosphothreonine: threonine 1859, threonine 1868, threonine 1884, and threonine 1924. A disordered region spans residues 1925 to 2033; that stretch reads PAGASDPVSV…QTPKIRAQPL (109 aa). A Phosphoserine modification is found at serine 1944. Lysine 1966 is subject to N6-acetyllysine. Phosphothreonine occurs at positions 1989, 2005, and 2025. Lysine 2027 is covalently cross-linked (Glycyl lysine isopeptide (Lys-Gly) (interchain with G-Cter in SUMO1); alternate). Lysine 2027 participates in a covalent cross-link: Glycyl lysine isopeptide (Lys-Gly) (interchain with G-Cter in SUMO2); alternate. Position 2045 is a phosphothreonine (threonine 2045). Positions 2047–2112 are disordered; the sequence is AGANDSVTVE…SPGTPAPVQE (66 aa). Residues 2063–2078 are compositionally biased toward polar residues; it reads LESSQAEPVKTPASTK. Phosphoserine is present on serine 2065. Threonine 2073 is modified (phosphothreonine). Residues serine 2076, serine 2095, and serine 2103 each carry the phosphoserine modification. The segment covering 2088 to 2101 has biased composition (basic and acidic residues); that stretch reads VDVREDPSILEKKT. 2 positions are modified to phosphothreonine: threonine 2106 and threonine 2122. Positions 2124 to 2343 are disordered; the sequence is KQKLDFTGNS…PLSKSSCASQ (220 aa). Basic residues predominate over residues 2135 to 2144; the sequence is GHKRRPRTPK. Threonine 2162 bears the Phosphothreonine mark. The span at 2180-2195 shows a compositional bias: polar residues; it reads LESSQAKPVKTPASTK. The residue at position 2182 (serine 2182) is a Phosphoserine. Residue threonine 2190 is modified to Phosphothreonine. Serine 2198 bears the Phosphoserine mark. Phosphothreonine is present on threonine 2218. Serine 2220 bears the Phosphoserine mark. A phosphothreonine mark is found at threonine 2227, threonine 2243, and threonine 2283. Serine 2303 carries the phosphoserine modification. A phosphothreonine mark is found at threonine 2311 and threonine 2348. Over residues 2378 to 2390 the composition is skewed to basic residues; it reads RGKRQQRSCKKRS. The tract at residues 2378–2447 is disordered; it reads RGKRQQRSCK…RRQARTGLRK (70 aa). Phosphoserine occurs at positions 2390 and 2392. Threonine 2405 carries the post-translational modification Phosphothreonine. Phosphoserine is present on residues serine 2423 and serine 2425. Residue lysine 2451 forms a Glycyl lysine isopeptide (Lys-Gly) (interchain with G-Cter in SUMO1) linkage. Serine 2464, serine 2487, serine 2545, and serine 2592 each carry phosphoserine. Residues 2538-2547 show a composition bias toward basic and acidic residues; it reads TPKMPDKSPE. Disordered regions lie at residues 2538-2828 and 2879-3160; these read TPKM…QVSK and HDTS…DAKT. Residues 2605-2622 show a composition bias toward polar residues; it reads VQKQDPSVSLTGRRNQPR. Phosphoserine is present on serine 2649. Composition is skewed to basic and acidic residues over residues 2673-2697 and 2704-2714; these read GVKE…KEPV and EEVKKSTKQKI. A Glycyl lysine isopeptide (Lys-Gly) (interchain with G-Cter in SUMO1); alternate cross-link involves residue lysine 2675. Lysine 2675 participates in a covalent cross-link: Glycyl lysine isopeptide (Lys-Gly) (interchain with G-Cter in SUMO2); alternate. 2 stretches are compositionally biased toward polar residues: residues 2764 to 2781 and 2883 to 2892; these read MPCN…QSSP and ILKSTQQQKP. 2 positions are modified to phosphoserine: serine 2768 and serine 2780. Over residues 2907–2923 the composition is skewed to basic and acidic residues; sequence ASKEDPKEVLVDTRDHA. Lysine 2909 is covalently cross-linked (Glycyl lysine isopeptide (Lys-Gly) (interchain with G-Cter in SUMO2)). Position 2928 is an N6-acetyllysine (lysine 2928). Residues 2959-2971 are compositionally biased toward basic and acidic residues; sequence EATDEKPVPEKKR. ATP is bound at residue 2973–2980; it reads ASSKRHVS. A Phosphoserine modification is found at serine 2980. Basic and acidic residues predominate over residues 3008-3018; sequence KTEEMEAKREN. Phosphothreonine is present on threonine 3021. Residues 3039 to 3057 show a composition bias toward basic and acidic residues; sequence PKFDASAENVGIKKNEKTM. Residues 3058–3067 are compositionally biased toward polar residues; the sequence is KTASQETELQ. Serine 3061 is subject to Phosphoserine. 2 stretches are compositionally biased toward basic and acidic residues: residues 3118 to 3132 and 3140 to 3160; these read PQEE…DVRC and VALD…DAKT.

In terms of assembly, interacts with KIF15. Interacts (via the FHA domain) with NIFK. Interacts with PPP1CC. Component of a complex at least composed of ZNF335, HCFC1, CCAR2, EMSY, MKI67, RBBP5, ASH2L and WDR5; the complex is formed as a result of interactions between components of a nuclear receptor-mediated transcription complex and a histone methylation complex. Interacts with ZNF335. Hyperphosphorylated by CDK1 in mitosis; hyperphosphorylatiom prevents undergoing liquid-liquid phase separation. Dephosphorylated by PPP1CC at the onset of anaphase. Dephosphorylation by protein phosphatase 2A (PP2A) and simultaneous exposure of the positively charged patch (CP) during mitotic exit induce the RNA-dependent formation of a liquid-like condensed phase on the chromosome surface. In terms of processing, ubiquitinated by the APC/C complex after neuronal progenitors exit mitosis during brain development, leading to clearance from constitutive heterochromatin. As to expression, mainly present in proliferating cells (at protein level).

It is found in the chromosome. The protein localises to the nucleus. Its subcellular location is the nucleolus. Functionally, protein that associates with the surface of mitotic chromosomes and acts both as a chromosome repellent during early mitosis and chromosome attractant during late mitosis. Required to maintain individual mitotic chromosomes dispersed in the cytoplasm following nuclear envelope disassembly. During early mitosis, relocalizes from nucleoli to the chromosome surface where it forms extended brush structures that cover a substantial fraction of the chromosome surface. The MKI67 brush structure prevents chromosomes from collapsing into a single chromatin mass by forming a steric and electrostatic charge barrier: the protein has a high net electrical charge and acts as a surfactant, dispersing chromosomes and enabling independent chromosome motility. During mitotic anaphase, the MKI67 brush structure collapses and MKI67 switches from a chromosome repellent to a chromosome attractant to promote chromosome clustering and facilitate the exclusion of large cytoplasmic particles from the future nuclear space. Mechanistically, dephosphorylation during mitotic exit and simultaneous exposure of a conserved basic patch induce the RNA-dependent formation of a liquid-like condensed phase on the chromosome surface, promoting coalescence of neighboring chromosome surfaces and clustering of chromosomes. Binds premature ribosomal RNAs during anaphase; promoting liquid-liquid phase separation. Binds DNA, with a preference for supercoiled DNA and AT-rich DNA. Does not contribute to the internal structure of mitotic chromosomes. May play a role in chromatin organization; it is however unclear whether it plays a direct role in chromatin organization or whether it is an indirect consequence of its function in mitotic chromosome. This chain is Proliferation marker protein Ki-67, found in Mus musculus (Mouse).